Here is a 196-residue protein sequence, read N- to C-terminus: Peroxisomal membrane protein 2 (196 aa).

Topologically, residues 1–30 (MAPAASKLRAEAGLGPLPRRALSQYLRLLR) are cytoplasmic. Residues 31 to 51 (LYPVLTKAATSGILSALGNFL) traverse the membrane as a helical segment. Over 52 to 76 (AQLIEKKQKKENCSQKLDVSGPLRY) the chain is Peroxisomal. Residues 77 to 97 (AIYGFFFTGPLGHFFYLLMER) traverse the membrane as a helical segment. The Cytoplasmic portion of the chain corresponds to 98–115 (WIPSEVPLAGIKRLLLDR). A helical transmembrane segment spans residues 116-136 (LLFAPAFLSLFFLVMNFLEGQ). Topologically, residues 137 to 174 (DTAAFAAKMKSGFWPALRMNWRVWTPVQFININYIPVQ) are peroxisomal. The chain crosses the membrane as a helical span at residues 175–196 (FRVLFANLVALFWYAYLASLGK).

This sequence belongs to the peroxisomal membrane protein PXMP2/4 family. Interacts with PEX19 and SIVA1.

It is found in the peroxisome membrane. In terms of biological role, seems to be involved in pore-forming activity and may contribute to the unspecific permeability of the peroxisomal membrane. The sequence is that of Peroxisomal membrane protein 2 (PXMP2) from Bos taurus (Bovine).